Here is a 420-residue protein sequence, read N- to C-terminus: Succinate--CoA ligase [GDP-forming] subunit beta, mitochondrial (420 aa).

One can recognise an ATP-grasp domain in the interval 35–263 (KSLMDKYGVN…NASFRQKEIF (229 aa)). GTP contacts are provided by residues Gln46, 78-80 (GRG), and Val135. Mg(2+)-binding residues include Asn232 and Asp246. Substrate-binding positions include Asn297 and 354–356 (GIM).

The protein belongs to the succinate/malate CoA ligase beta subunit family. GTP-specific subunit beta subfamily. As to quaternary structure, heterodimer of an alpha and a beta subunit. The beta subunit determines specificity for GTP. The cofactor is Mg(2+).

The protein resides in the mitochondrion. It catalyses the reaction GTP + succinate + CoA = succinyl-CoA + GDP + phosphate. It participates in carbohydrate metabolism; tricarboxylic acid cycle; succinate from succinyl-CoA (ligase route): step 1/1. In terms of biological role, GTP-specific succinyl-CoA synthetase functions in the citric acid cycle (TCA), coupling the hydrolysis of succinyl-CoA to the synthesis of GTP and thus represents the only step of substrate-level phosphorylation in the TCA. The beta subunit provides nucleotide specificity of the enzyme and binds the substrate succinate, while the binding sites for coenzyme A and phosphate are found in the alpha subunit. The polypeptide is Succinate--CoA ligase [GDP-forming] subunit beta, mitochondrial (scsB) (Dictyostelium discoideum (Social amoeba)).